A 243-amino-acid chain; its full sequence is Juxtaposed with another zinc finger protein 1 (243 aa).

The segment at 12-37 (NTCRFGGCGLHFPTLADLIEHIEDNH) adopts a C2H2-type 1 zinc-finger fold. The interval 39-79 (DTDPRVLEKQELQQPTYVALSYINRFMTDAARREQESLKKK) is required for interaction with NR2C2. The span at 89–108 (SSSVSRGNVSTPPRHSSGSL) shows a compositional bias: polar residues. Positions 89–151 (SSSVSRGNVS…SDSDESWTTE (63 aa)) are disordered. Residues Thr-109 and Thr-113 each carry the phosphothreonine modification. Residues 118-130 (PSSSFRSSTPTGS) show a composition bias toward low complexity. A compositionally biased stretch (acidic residues) spans 131 to 148 (EYDEEEVDYEESDSDESW). A C2H2-type 2 zinc finger spans residues 173-198 (FACPVPGCKKRYKNVNGIKYHAKNGH). The C2H2-type 3; degenerate zinc finger occupies 208–230 (FKCRCGKSYKTAQGLRHHTINFH).

In terms of assembly, interacts with NR2C2 (via ligand-binding region). As to expression, expressed in range of tissues with highest expression levels in testis, liver, muscle and fat and lowest levels in kidney. Detected in liver and white adipose tissue (at protein level).

It is found in the nucleus. Its function is as follows. Acts as a transcriptional corepressor of orphan nuclear receptor NR2C2. Inhibits expression of the gluconeogenesis enzyme PCK2 through inhibition of NR2C2 activity. Also involved in transcriptional activation of NAMPT by promoting expression of PPARA and PPARD. Plays a role in lipid metabolism by suppressing lipogenesis, increasing lipolysis and decreasing lipid accumulation in adipose tissue. Plays a role in glucose homeostasis by improving glucose metabolism and insulin sensitivity. This Mus musculus (Mouse) protein is Juxtaposed with another zinc finger protein 1 (Jazf1).